Reading from the N-terminus, the 52-residue chain is Ribosome modulation factor (52 aa).

Belongs to the ribosome modulation factor family.

The protein resides in the cytoplasm. In terms of biological role, during stationary phase, converts 70S ribosomes to an inactive dimeric form (100S ribosomes). This is Ribosome modulation factor from Xenorhabdus nematophila (strain ATCC 19061 / DSM 3370 / CCUG 14189 / LMG 1036 / NCIMB 9965 / AN6).